The primary structure comprises 136 residues: uncharacterized protein (136 aa).

The tract at residues 1-51 is disordered; it reads MAANATSGRPPSIALRQPEATGWRRGIPAKVATKGTQAEREGDVRSGGRAR. The segment covering 37–46 has biased composition (basic and acidic residues); it reads QAEREGDVRS.

This is an uncharacterized protein from Homo sapiens (Human).